The primary structure comprises 157 residues: 2-C-methyl-D-erythritol 2,4-cyclodiphosphate synthase (157 aa).

Residues Asp8 and His10 each coordinate a divalent metal cation. 4-CDP-2-C-methyl-D-erythritol 2-phosphate is bound by residues 8-10 and 34-35; these read DIH and HS. A divalent metal cation is bound at residue His42. 4-CDP-2-C-methyl-D-erythritol 2-phosphate contacts are provided by residues 56–58 and 132–135; these read DIG and TTNE.

Belongs to the IspF family. Homotrimer. The cofactor is a divalent metal cation.

It carries out the reaction 4-CDP-2-C-methyl-D-erythritol 2-phosphate = 2-C-methyl-D-erythritol 2,4-cyclic diphosphate + CMP. The protein operates within isoprenoid biosynthesis; isopentenyl diphosphate biosynthesis via DXP pathway; isopentenyl diphosphate from 1-deoxy-D-xylulose 5-phosphate: step 4/6. Functionally, involved in the biosynthesis of isopentenyl diphosphate (IPP) and dimethylallyl diphosphate (DMAPP), two major building blocks of isoprenoid compounds. Catalyzes the conversion of 4-diphosphocytidyl-2-C-methyl-D-erythritol 2-phosphate (CDP-ME2P) to 2-C-methyl-D-erythritol 2,4-cyclodiphosphate (ME-CPP) with a corresponding release of cytidine 5-monophosphate (CMP). The sequence is that of 2-C-methyl-D-erythritol 2,4-cyclodiphosphate synthase from Synechococcus sp. (strain JA-3-3Ab) (Cyanobacteria bacterium Yellowstone A-Prime).